The primary structure comprises 169 residues: Der GTPase-activating protein YihI (169 aa).

Disordered regions lie at residues 1-98 and 144-169; these read MKPS…PQAE and GLSY…LRGN. The span at 10 to 19 shows a compositional bias: basic residues; that stretch reads SKGHAKARRK. Residues 20–30 show a composition bias toward basic and acidic residues; sequence TREELDQEARD. Residues 31 to 40 are compositionally biased toward basic residues; the sequence is RKRQKKRRGH. Residues 49 to 58 show a composition bias toward polar residues; it reads GNTTSGSKGQ. Positions 147–159 are enriched in acidic residues; the sequence is YDDDEEEEEDEKQ. The segment covering 160–169 has biased composition (basic and acidic residues); that stretch reads EDMMRLLRGN.

Belongs to the YihI family. As to quaternary structure, interacts with Der.

In terms of biological role, a GTPase-activating protein (GAP) that modifies Der/EngA GTPase function. May play a role in ribosome biogenesis. The sequence is that of Der GTPase-activating protein YihI from Escherichia coli O139:H28 (strain E24377A / ETEC).